We begin with the raw amino-acid sequence, 586 residues long: Aspartate--tRNA(Asp/Asn) ligase (586 aa).

Position 172 (E172) interacts with L-aspartate. The aspartate stretch occupies residues 196 to 199 (QLYK). R218 lines the L-aspartate pocket. ATP-binding positions include 218–220 (RDE) and Q227. An L-aspartate-binding site is contributed by H446. An ATP-binding site is contributed by E480. An L-aspartate-binding site is contributed by R487. 532–535 (GIDR) is an ATP binding site.

The protein belongs to the class-II aminoacyl-tRNA synthetase family. Type 1 subfamily. Homodimer.

It localises to the cytoplasm. The enzyme catalyses tRNA(Asx) + L-aspartate + ATP = L-aspartyl-tRNA(Asx) + AMP + diphosphate. Its function is as follows. Aspartyl-tRNA synthetase with relaxed tRNA specificity since it is able to aspartylate not only its cognate tRNA(Asp) but also tRNA(Asn). Reaction proceeds in two steps: L-aspartate is first activated by ATP to form Asp-AMP and then transferred to the acceptor end of tRNA(Asp/Asn). In Borrelia garinii subsp. bavariensis (strain ATCC BAA-2496 / DSM 23469 / PBi) (Borreliella bavariensis), this protein is Aspartate--tRNA(Asp/Asn) ligase.